The sequence spans 872 residues: MSRFFRGGDDSSTDSSSEEEEVYTSEEEEEKVQAEDESSSEEESDEEESDEESSSDEEEGTKKKGASRFLQSDDESEEEEEEQSDDEATTKVKSAKDKRFDELESTISQIQNGQKINDWSLIANEFDKLNRQVVKLQDGSKAPKSYIKAIADLEDFMNETLAKQKVTPKKMNATNARGLNAVKQRIRKNNKEYQTQIDAYRKDADAFMESDDEVAAPKVVSKVRFEAPVVSAEQQEEDDKGFSTVDSRGKVVQYTPESILKHLRAIIESRGKKNTDRLEQIKVMETLNKVVPITPYQKIRVLQTLISARFDLGAGGAAQMPLDQWKAAERDLASLLEILEKEKDHVVVEGAEEWDDDDKLPTIPEGEKYLKVPGSVVSLIERLDDELTRSLQAIDPHTSEYIDRLTDEGSLYNTIFRGLLYYEHLRKDASLEVPQESLNRIIQRRLDHVYYKPAQVVKILEENAWKQVSAEADSEITPRSQSGDAGKLINILSNYLFENSEGIIRARAMLCQIYFLALHDEYYKSRDLMLTSHLQETIANFDIATQILYNRTLVQVGLCAFRKGLVYDAQNTLQEICGSGRQKELLAQGVMIQRYSQVTPEQERLEKQRQLPFHMHINLELLECVYLTCSMLLEIPLLAQTGSSPDVKKRIISKTYRRMLEYHERQIFTGPPENTRDHVMQASKALAAGEWKKATDFIHSIKIWDLMPNTEGIKTMLAKQIQEEGLRTYLFTYAPFYDTLAIATLSSMFELDSRKVSAVVSKMISHEELAAALDQVTETVIFRKGVELSRLQSLALTLSDKASSLIETNERTLEQKTQGSANAFSRKDNRGGGQRGGGQRGGRGGARTGGNPQRQAGGTQFTGGALGNAVRG.

The disordered stretch occupies residues 1 to 100 (MSRFFRGGDD…KVKSAKDKRF (100 aa)). Composition is skewed to acidic residues over residues 16–59 (SSEE…DEEE) and 72–87 (SDDE…SDDE). Over residues 88–100 (ATTKVKSAKDKRF) the composition is skewed to basic and acidic residues. One can recognise a PCI domain in the interval 613 to 787 (FHMHINLELL…ETVIFRKGVE (175 aa)). Positions 812–872 (TLEQKTQGSA…GGALGNAVRG (61 aa)) are disordered. A compositionally biased stretch (gly residues) spans 831 to 848 (GGGQRGGGQRGGRGGART).

This sequence belongs to the eIF-3 subunit C family. As to quaternary structure, component of the eukaryotic translation initiation factor 3 (eIF-3) complex.

The protein resides in the cytoplasm. Functionally, component of the eukaryotic translation initiation factor 3 (eIF-3) complex, which is involved in protein synthesis of a specialized repertoire of mRNAs and, together with other initiation factors, stimulates binding of mRNA and methionyl-tRNAi to the 40S ribosome. The eIF-3 complex specifically targets and initiates translation of a subset of mRNAs involved in cell proliferation. The sequence is that of Eukaryotic translation initiation factor 3 subunit C (nip-1) from Neurospora crassa (strain ATCC 24698 / 74-OR23-1A / CBS 708.71 / DSM 1257 / FGSC 987).